Reading from the N-terminus, the 161-residue chain is Eukaryotic translation initiation factor 5A-2 (161 aa).

Position 54 is a hypusine (Lys-54).

Belongs to the eIF-5A family. In terms of processing, lys-54 undergoes hypusination, a unique post-translational modification that consists in the addition of a butylamino group from spermidine to lysine side chain and leads to the formation of a hypusine residue. eIF-5As are the only known proteins to undergo this modification, which is essential for their function. Expressed in the somatic tissues.

It localises to the cytoplasm. Translation factor that promotes translation elongation and termination, particularly upon ribosome stalling at specific amino acid sequence contexts. Binds between the exit (E) and peptidyl (P) site of the ribosome and promotes rescue of stalled ribosome: specifically required for efficient translation of polyproline-containing peptides as well as other motifs that stall the ribosome. Acts as a ribosome quality control (RQC) cofactor by joining the RQC complex to facilitate peptidyl transfer during CAT tailing step. Acts in somatic tissues and its function in the soma is essential for normal growth and reproduction. The polypeptide is Eukaryotic translation initiation factor 5A-2 (iff-2) (Caenorhabditis elegans).